Reading from the N-terminus, the 447-residue chain is Protein cortex (447 aa).

6 WD repeats span residues 108–148, 149–188, 198–237, 281–325, 344–380, and 384–423; these read TYSY…IGHG, FAEYEIQCCKFDPRGELLALGTYMKTLEIHNNSKSKKIMS, NMNCSITAVDWSPTGNSFAAGCSGGAVTSFTRAAKLISWR, DSDW…VRDT, GELVLSMWHSDRATLHPKTCSQLVVLSDPDTMVDQWG, and SGLDRVRTMIFSPDGTKLATATTDEDLIIWNFLPEDNKMK. Positions 384–395 match the D-box motif; it reads SGLDRVRTMIFS.

It belongs to the WD repeat CORT family.

It localises to the cytoplasm. In terms of biological role, controls wing pigmentation patterning by regulating scale cell development, thereby playing a key role in mimicry and crypsis. Probably acts as an activator of the anaphase promoting complex/cyclosome (APC/C) that promotes the ubiquitin ligase activity and substrate specificity of the APC/C. This is Protein cortex from Heliconius melpomene (Postman butterfly).